A 794-amino-acid polypeptide reads, in one-letter code: Inactive zinc metalloprotease C354.09c (794 aa).

The interval 1 to 56 is disordered; the sequence is MTDEKHVYVPPPKDPPSYEEVALHSALNNSAPPNDGEQNETSMEEMEIIEPPSEDS. The helical transmembrane segment at 91 to 111 threads the bilayer; it reads IPFQFLYLAVIATVIILASYY.

This sequence belongs to the peptidase M28 family. M28B subfamily.

The protein resides in the membrane. The polypeptide is Inactive zinc metalloprotease C354.09c (Schizosaccharomyces pombe (strain 972 / ATCC 24843) (Fission yeast)).